The chain runs to 769 residues: Serine protease HtrA-like (769 aa).

The span at 1-20 shows a compositional bias: basic residues; it reads MDIGKKHVIPKSQYRRKRRE. Residues 1–390 are disordered; that stretch reads MDIGKKHVIP…ATSKLNKGRA (390 aa). Composition is skewed to basic and acidic residues over residues 21–64 and 71–108; these read FFHN…ERFK and LEQR…DVSK. Residues 126–137 show a composition bias toward polar residues; the sequence is YEQNSEATLSTK. Positions 138 to 186 are enriched in basic and acidic residues; the sequence is STDKVESTEMRKLSSDKNKVGHEEQHVLSKPSEHDKETRIDSESSRTDS. The span at 247–262 shows a compositional bias: polar residues; it reads QQSQNEQTKTYTYGDS. 2 stretches are compositionally biased toward basic and acidic residues: residues 264–296 and 310–330; these read QNDK…HIVD and KTDD…HKQN. Over residues 331-347 the composition is skewed to polar residues; sequence ADSSETVGYQSQSTASH. Over residues 348–364 the composition is skewed to basic and acidic residues; that stretch reads RSTEKRNISINDHDKLN. Positions 365 to 390 are enriched in polar residues; it reads GQKTNTKTSANNNQKKATSKLNKGRA. The helical transmembrane segment at 410–430 threads the bilayer; sequence LVILMGIIILIVILNAIFNNV. Residues His504, Asp534, and Ser619 each act as charge relay system in the active site. The region spanning 680–733 is the PDZ domain; it reads IASLNSFERQAVKLPGKVKNGVVVDQVDNNGLADQSGLKKGDVITELDGKLLED.

This sequence belongs to the peptidase S1C family.

It is found in the cell membrane. The polypeptide is Serine protease HtrA-like (Staphylococcus aureus (strain USA300)).